Consider the following 349-residue polypeptide: ATP phosphoribosyltransferase regulatory subunit (349 aa).

The interval 327-349 is disordered; that stretch reads GRGRGVRPRRASARGGRARARPR. Positions 330 to 349 are enriched in basic residues; that stretch reads RGVRPRRASARGGRARARPR.

Belongs to the class-II aminoacyl-tRNA synthetase family. HisZ subfamily. Heteromultimer composed of HisG and HisZ subunits.

It localises to the cytoplasm. It participates in amino-acid biosynthesis; L-histidine biosynthesis; L-histidine from 5-phospho-alpha-D-ribose 1-diphosphate: step 1/9. Required for the first step of histidine biosynthesis. May allow the feedback regulation of ATP phosphoribosyltransferase activity by histidine. In Anaeromyxobacter dehalogenans (strain 2CP-1 / ATCC BAA-258), this protein is ATP phosphoribosyltransferase regulatory subunit.